Reading from the N-terminus, the 347-residue chain is Transcription factor EC (347 aa).

The tract at residues 1-119 is necessary for transcriptional transactivation; that stretch reads MTLDHQIINP…GLTSASCPSS (119 aa). Positions 139–192 constitute a bHLH domain; sequence QKKDNHNLIERRRRYNINYRIKELGTLIPKSNDPDMRWNKGTILKASVEYIKWL. The segment at 271–347 is necessary for transcriptional transactivation; sequence PSPELCDQAI…SFSSDDGDEL (77 aa). Residues 319–347 form a disordered region; sequence DPLLSATSPAVSKESSRRSSFSSDDGDEL. Residues 326–341 are compositionally biased toward low complexity; that stretch reads SPAVSKESSRRSSFSS.

The protein belongs to the MiT/TFE family. In terms of assembly, homodimer. Forms heterodimers with TFE3. Forms heterodimers with MITF. Interacts with MITF. In terms of tissue distribution, expressed moderately in spleen, kidney, bone marrow, small intestine and leukocytes. Expressed weakly in testis, trachea and colon.

The protein resides in the nucleus. In terms of biological role, transcriptional regulator that acts as a repressor or an activator. Acts as a transcriptional repressor on minimal promoter containing element F (that includes an E-box sequence). Binds to element F in an E-box sequence-specific manner. Acts as a transcriptional transactivator on the proximal promoter region of the tartrate-resistant acid phosphatase (TRAP) E-box containing promoter. Collaborates with MITF in target gene activation. Acts as a transcriptional repressor on minimal promoter containing mu E3 enhancer sequence. Binds to mu E3 DNA sequence of the immunoglobulin heavy-chain gene enhancer. Binds DNA in a homo- or heterodimeric form. This is Transcription factor EC (TFEC) from Homo sapiens (Human).